The following is a 719-amino-acid chain: Fatty acid oxidation complex subunit alpha (719 aa).

An enoyl-CoA hydratase/isomerase region spans residues 1-190 (MVYQGNRITV…KLGLVDATVA (190 aa)). A substrate-binding site is contributed by D298. The 3-hydroxyacyl-CoA dehydrogenase stretch occupies residues 313 to 719 (HDINEAAVLG…AAGETFYATA (407 aa)). Residues M326, D345, 402-404 (VVE), K409, and S431 contribute to the NAD(+) site. H452 (for 3-hydroxyacyl-CoA dehydrogenase activity) is an active-site residue. Residue N455 coordinates NAD(+). Position 502 (N502) interacts with substrate.

The protein in the N-terminal section; belongs to the enoyl-CoA hydratase/isomerase family. It in the C-terminal section; belongs to the 3-hydroxyacyl-CoA dehydrogenase family. In terms of assembly, heterotetramer of two alpha chains (FadB) and two beta chains (FadA).

The enzyme catalyses a (3S)-3-hydroxyacyl-CoA + NAD(+) = a 3-oxoacyl-CoA + NADH + H(+). It carries out the reaction a (3S)-3-hydroxyacyl-CoA = a (2E)-enoyl-CoA + H2O. The catalysed reaction is a 4-saturated-(3S)-3-hydroxyacyl-CoA = a (3E)-enoyl-CoA + H2O. It catalyses the reaction (3S)-3-hydroxybutanoyl-CoA = (3R)-3-hydroxybutanoyl-CoA. The enzyme catalyses a (3Z)-enoyl-CoA = a 4-saturated (2E)-enoyl-CoA. It carries out the reaction a (3E)-enoyl-CoA = a 4-saturated (2E)-enoyl-CoA. It functions in the pathway lipid metabolism; fatty acid beta-oxidation. Functionally, involved in the aerobic and anaerobic degradation of long-chain fatty acids via beta-oxidation cycle. Catalyzes the formation of 3-oxoacyl-CoA from enoyl-CoA via L-3-hydroxyacyl-CoA. It can also use D-3-hydroxyacyl-CoA and cis-3-enoyl-CoA as substrate. This chain is Fatty acid oxidation complex subunit alpha, found in Psychrobacter cryohalolentis (strain ATCC BAA-1226 / DSM 17306 / VKM B-2378 / K5).